Reading from the N-terminus, the 363-residue chain is UDP-N-acetylglucosamine--N-acetylmuramyl-(pentapeptide) pyrophosphoryl-undecaprenol N-acetylglucosamine transferase (363 aa).

Residues 14–16 (TGG), R171, S200, and Q290 contribute to the UDP-N-acetyl-alpha-D-glucosamine site.

Belongs to the glycosyltransferase 28 family. MurG subfamily.

The protein localises to the cell inner membrane. The enzyme catalyses di-trans,octa-cis-undecaprenyl diphospho-N-acetyl-alpha-D-muramoyl-L-alanyl-D-glutamyl-meso-2,6-diaminopimeloyl-D-alanyl-D-alanine + UDP-N-acetyl-alpha-D-glucosamine = di-trans,octa-cis-undecaprenyl diphospho-[N-acetyl-alpha-D-glucosaminyl-(1-&gt;4)]-N-acetyl-alpha-D-muramoyl-L-alanyl-D-glutamyl-meso-2,6-diaminopimeloyl-D-alanyl-D-alanine + UDP + H(+). It functions in the pathway cell wall biogenesis; peptidoglycan biosynthesis. Its function is as follows. Cell wall formation. Catalyzes the transfer of a GlcNAc subunit on undecaprenyl-pyrophosphoryl-MurNAc-pentapeptide (lipid intermediate I) to form undecaprenyl-pyrophosphoryl-MurNAc-(pentapeptide)GlcNAc (lipid intermediate II). This is UDP-N-acetylglucosamine--N-acetylmuramyl-(pentapeptide) pyrophosphoryl-undecaprenol N-acetylglucosamine transferase from Borreliella afzelii (strain PKo) (Borrelia afzelii).